We begin with the raw amino-acid sequence, 450 residues long: Trigger factor (450 aa).

Residues 161 to 246 form the PPIase FKBP-type domain; that stretch reads GDRVVIDFKG…VKTVEAPEYP (86 aa). The segment at 422-450 is disordered; the sequence is PMSLQELMSPQQPEAESAEGESKQDETKE. Basic and acidic residues predominate over residues 441–450; it reads GESKQDETKE.

This sequence belongs to the FKBP-type PPIase family. Tig subfamily.

It is found in the cytoplasm. It carries out the reaction [protein]-peptidylproline (omega=180) = [protein]-peptidylproline (omega=0). Its function is as follows. Involved in protein export. Acts as a chaperone by maintaining the newly synthesized protein in an open conformation. Functions as a peptidyl-prolyl cis-trans isomerase. The chain is Trigger factor from Alkalilimnicola ehrlichii (strain ATCC BAA-1101 / DSM 17681 / MLHE-1).